Consider the following 292-residue polypeptide: Protease HtpX (292 aa).

Helical transmembrane passes span 5-25 (IFLF…VMSL) and 34-54 (SGLL…SLLL). Position 140 (H140) interacts with Zn(2+). E141 is an active-site residue. Residue H144 participates in Zn(2+) binding. A run of 2 helical transmembrane segments spans residues 155–175 (LLQG…GGII) and 193–213 (IIVF…AMWF). E218 lines the Zn(2+) pocket.

Belongs to the peptidase M48B family. Zn(2+) is required as a cofactor.

The protein localises to the cell inner membrane. This is Protease HtpX from Xanthomonas euvesicatoria pv. vesicatoria (strain 85-10) (Xanthomonas campestris pv. vesicatoria).